We begin with the raw amino-acid sequence, 149 residues long: UPF0179 protein MM_0589 (149 aa).

This sequence belongs to the UPF0179 family.

This Methanosarcina mazei (strain ATCC BAA-159 / DSM 3647 / Goe1 / Go1 / JCM 11833 / OCM 88) (Methanosarcina frisia) protein is UPF0179 protein MM_0589.